The chain runs to 390 residues: Cold-responsive protein kinase 1 (390 aa).

The Protein kinase domain maps to 41–320 (FSAENKIGEG…VRLLTGEKDI (280 aa)). Residues 47–55 (IGEGGFGSV) and K69 contribute to the ATP site. Y114 carries the post-translational modification Phosphotyrosine. D169 functions as the Proton acceptor in the catalytic mechanism. A phosphoserine mark is found at S173 and S202. Residues T203 and T208 each carry the phosphothreonine modification. Y216 carries the post-translational modification Phosphotyrosine. The interval 345-390 (TKTEQVNRQNYTNPSSSSNGSSRDHSNAYSSGASSANAGNTFSSTI) is disordered. A compositionally biased stretch (low complexity) spans 354-390 (NYTNPSSSSNGSSRDHSNAYSSGASSANAGNTFSSTI).

Belongs to the protein kinase superfamily. Ser/Thr protein kinase family. Interacts with and phosphorylates 14-3-3 proteins. Binds to GRF6 at the plasma membrane. In terms of processing, autophosphorylated.

It localises to the cell membrane. It carries out the reaction L-seryl-[protein] + ATP = O-phospho-L-seryl-[protein] + ADP + H(+). The enzyme catalyses L-threonyl-[protein] + ATP = O-phospho-L-threonyl-[protein] + ADP + H(+). Activated by cold. Negative regulator of freezing tolerance that phosphorylates 14-3-3 proteins (e.g. GRF6) thus triggering their translocation from the cytosol to the nucleus in response to cold stress. The polypeptide is Cold-responsive protein kinase 1 (Arabidopsis thaliana (Mouse-ear cress)).